The following is a 212-amino-acid chain: Phosphoenolpyruvate guanylyltransferase (212 aa).

Residues T139, G155, and S158 each coordinate phosphoenolpyruvate.

The protein belongs to the CofC family.

The catalysed reaction is phosphoenolpyruvate + GTP + H(+) = enolpyruvoyl-2-diphospho-5'-guanosine + diphosphate. Its pathway is cofactor biosynthesis; coenzyme F420 biosynthesis. Guanylyltransferase that catalyzes the activation of phosphoenolpyruvate (PEP) as enolpyruvoyl-2-diphospho-5'-guanosine, via the condensation of PEP with GTP. It is involved in the biosynthesis of coenzyme F420, a hydride carrier cofactor. This chain is Phosphoenolpyruvate guanylyltransferase, found in Streptomyces coelicolor (strain ATCC BAA-471 / A3(2) / M145).